The sequence spans 260 residues: Lysozyme D (260 aa).

The signal sequence occupies residues 1-19 (MRLLVTLILLIFVLTVSGQ). A disordered region spans residues 83 to 148 (GSTTTGGTGS…SGGSSGSGSG (66 aa)). Gly residues-rich tracts occupy residues 101–119 (SGSGSGSGSGSGSGSGSGT) and 129–147 (SGSGSGSSSGSGGSSGSGS).

It belongs to the dictyostelium lysozyme family. Post-translationally, contains disulfide bonds.

It localises to the cytoplasmic vesicle lumen. The catalysed reaction is Hydrolysis of (1-&gt;4)-beta-linkages between N-acetylmuramic acid and N-acetyl-D-glucosamine residues in a peptidoglycan and between N-acetyl-D-glucosamine residues in chitodextrins.. Its function is as follows. Has antibacterial activity. In Dictyostelium discoideum (Social amoeba), this protein is Lysozyme D (alyD-1).